A 456-amino-acid chain; its full sequence is Protein COBRA (456 aa).

A signal peptide spans Met1–Ala36. N-linked (GlcNAc...) asparagine glycosylation is found at Asn45, Asn170, Asn178, Asn217, Asn242, Asn258, Asn328, Asn343, and Asn362. Residue Asn431 is the site of GPI-anchor amidated asparagine attachment. The propeptide at Gly432 to Ala456 is removed in mature form.

This sequence belongs to the COBRA family. As to expression, expressed in roots, stems, leaves, flowers and siliques. Up-regulated in the root zone of rapid longitudinal expansion.

It localises to the lateral cell membrane. Functionally, involved in determining the orientation of cell expansion, probably by playing an important role in cellulose deposition. May act by recruiting cellulose synthesizing complexes to discrete positions on the cell surface. This chain is Protein COBRA (COB), found in Arabidopsis thaliana (Mouse-ear cress).